Reading from the N-terminus, the 455-residue chain is Glutamyl-tRNA reductase (455 aa).

Substrate is bound by residues 49–52 (TCNR), S109, 114–116 (ETQ), and Q120. The active-site Nucleophile is the C50. 189-194 (GAGKMG) contacts NADP(+).

It belongs to the glutamyl-tRNA reductase family. In terms of assembly, homodimer.

It carries out the reaction (S)-4-amino-5-oxopentanoate + tRNA(Glu) + NADP(+) = L-glutamyl-tRNA(Glu) + NADPH + H(+). Its pathway is porphyrin-containing compound metabolism; protoporphyrin-IX biosynthesis; 5-aminolevulinate from L-glutamyl-tRNA(Glu): step 1/2. In terms of biological role, catalyzes the NADPH-dependent reduction of glutamyl-tRNA(Glu) to glutamate 1-semialdehyde (GSA). This chain is Glutamyl-tRNA reductase, found in Bacillus subtilis (strain 168).